The primary structure comprises 405 residues: Glucoside xylosyltransferase 1 (405 aa).

At 1–2 (MR) the chain is on the cytoplasmic side. A helical; Signal-anchor for type II membrane protein membrane pass occupies residues 3 to 23 (IYLRTFGLCIVVALLSLVFLF). Residues 24-405 (SKHDEGSFSA…RLQRATPPGD (382 aa)) are Lumenal-facing. A disordered region spans residues 46-65 (SFNGAKAKQRPTATTSHRDV). Residues asparagine 202, asparagine 243, asparagine 277, and asparagine 372 are each glycosylated (N-linked (GlcNAc...) asparagine).

This sequence belongs to the glycosyltransferase 8 family.

The protein localises to the membrane. It catalyses the reaction 3-O-(beta-D-glucosyl)-L-seryl-[EGF-like domain protein] + UDP-alpha-D-xylose = 3-O-[alpha-D-xylosyl-(1-&gt;3)-beta-D-glucosyl]-L-seryl-[EGF-like domain protein] + UDP + H(+). Functionally, glycosyltransferase which elongates the O-linked glucose attached to EGF-like repeats in the extracellular domain of Notch proteins by catalyzing the addition of xylose. The protein is Glucoside xylosyltransferase 1 (gxylt1) of Danio rerio (Zebrafish).